Consider the following 225-residue polypeptide: NAD(P)H-quinone oxidoreductase subunit K, chloroplastic (225 aa).

Positions 43, 44, 108, and 139 each coordinate [4Fe-4S] cluster.

Belongs to the complex I 20 kDa subunit family. NDH is composed of at least 16 different subunits, 5 of which are encoded in the nucleus. Requires [4Fe-4S] cluster as cofactor.

Its subcellular location is the plastid. The protein localises to the chloroplast thylakoid membrane. The enzyme catalyses a plastoquinone + NADH + (n+1) H(+)(in) = a plastoquinol + NAD(+) + n H(+)(out). It catalyses the reaction a plastoquinone + NADPH + (n+1) H(+)(in) = a plastoquinol + NADP(+) + n H(+)(out). In terms of biological role, NDH shuttles electrons from NAD(P)H:plastoquinone, via FMN and iron-sulfur (Fe-S) centers, to quinones in the photosynthetic chain and possibly in a chloroplast respiratory chain. The immediate electron acceptor for the enzyme in this species is believed to be plastoquinone. Couples the redox reaction to proton translocation, and thus conserves the redox energy in a proton gradient. In Triticum aestivum (Wheat), this protein is NAD(P)H-quinone oxidoreductase subunit K, chloroplastic.